The chain runs to 644 residues: Chaperone protein HscA (644 aa).

Belongs to the heat shock protein 70 family.

Functionally, chaperone involved in the maturation of iron-sulfur cluster-containing proteins. Has a low intrinsic ATPase activity which is markedly stimulated by HscB. Involved in the maturation of IscU. The polypeptide is Chaperone protein HscA (Yersinia pseudotuberculosis serotype I (strain IP32953)).